The sequence spans 287 residues: Thiazole synthase (287 aa).

The active-site Schiff-base intermediate with DXP is lysine 111. Residues glycine 172, alanine 203–glycine 204, and asparagine 225–threonine 226 contribute to the 1-deoxy-D-xylulose 5-phosphate site. The disordered stretch occupies residues proline 268 to serine 287.

The protein belongs to the ThiG family. In terms of assembly, homotetramer. Forms heterodimers with either ThiH or ThiS.

Its subcellular location is the cytoplasm. It carries out the reaction [ThiS sulfur-carrier protein]-C-terminal-Gly-aminoethanethioate + 2-iminoacetate + 1-deoxy-D-xylulose 5-phosphate = [ThiS sulfur-carrier protein]-C-terminal Gly-Gly + 2-[(2R,5Z)-2-carboxy-4-methylthiazol-5(2H)-ylidene]ethyl phosphate + 2 H2O + H(+). It participates in cofactor biosynthesis; thiamine diphosphate biosynthesis. Catalyzes the rearrangement of 1-deoxy-D-xylulose 5-phosphate (DXP) to produce the thiazole phosphate moiety of thiamine. Sulfur is provided by the thiocarboxylate moiety of the carrier protein ThiS. In vitro, sulfur can be provided by H(2)S. The sequence is that of Thiazole synthase from Rhodopirellula baltica (strain DSM 10527 / NCIMB 13988 / SH1).